We begin with the raw amino-acid sequence, 1028 residues long: Exportin-T (1028 aa).

The protein belongs to the exportin family.

The protein localises to the nucleus. It is found in the cytoplasm. Functionally, tRNA nucleus export receptor which facilitates tRNA translocation across the nuclear pore complex. Involved in pre-tRNA splicing, probably by affecting the interaction of pre-tRNA with splicing endonuclease. This is Exportin-T (los1) from Aspergillus terreus (strain NIH 2624 / FGSC A1156).